The chain runs to 397 residues: uncharacterized protein (397 aa).

Disordered stretches follow at residues 159–203 (LNSS…KSTI) and 221–397 (NSVK…KTKN). The span at 221-240 (NSVKSSPSKSFVSISSPVQS) shows a compositional bias: low complexity. 2 stretches are compositionally biased toward polar residues: residues 285–309 (TSTL…SSST) and 320–330 (VNPNSTSSVTF). A DNA-binding region (zn(2)-C6 fungal-type) is located at residues 342–371 (CSRCKKSKKGCDRQRPCGRCRDAGLNSEDC). The segment covering 350 to 363 (KGCDRQRPCGRCRD) has biased composition (basic and acidic residues). The span at 383–397 (RKPRGRGRGRPKTKN) shows a compositional bias: basic residues.

The protein resides in the nucleus. This is an uncharacterized protein from Schizosaccharomyces pombe (strain 972 / ATCC 24843) (Fission yeast).